A 480-amino-acid chain; its full sequence is Bifunctional protein GlmU (480 aa).

A pyrophosphorylase region spans residues 1–247; sequence MATPIDVVIM…AAQVAGVNSP (247 aa). UDP-N-acetyl-alpha-D-glucosamine-binding positions include Lys24, Gln86, 91–92, 113–115, Gly150, Glu172, and Asn245; these read GT and SGD. Mg(2+) is bound at residue Asp115. Residue Asn245 participates in Mg(2+) binding. The tract at residues 248 to 268 is linker; the sequence is VQLAELERVYQLRQATALMEQ. The segment at 269 to 480 is N-acetyltransferase; the sequence is GVRLADPARF…WKRPVKVSKG (212 aa). The UDP-N-acetyl-alpha-D-glucosamine site is built by Arg355 and Lys373. His385 (proton acceptor) is an active-site residue. UDP-N-acetyl-alpha-D-glucosamine contacts are provided by Tyr388 and Asn399. Acetyl-CoA is bound by residues Ala402, 408–409, Ser427, Gly445, and Arg462; that span reads NY.

It in the N-terminal section; belongs to the N-acetylglucosamine-1-phosphate uridyltransferase family. The protein in the C-terminal section; belongs to the transferase hexapeptide repeat family. Homotrimer. The cofactor is Mg(2+).

It localises to the cytoplasm. The catalysed reaction is alpha-D-glucosamine 1-phosphate + acetyl-CoA = N-acetyl-alpha-D-glucosamine 1-phosphate + CoA + H(+). It carries out the reaction N-acetyl-alpha-D-glucosamine 1-phosphate + UTP + H(+) = UDP-N-acetyl-alpha-D-glucosamine + diphosphate. The protein operates within nucleotide-sugar biosynthesis; UDP-N-acetyl-alpha-D-glucosamine biosynthesis; N-acetyl-alpha-D-glucosamine 1-phosphate from alpha-D-glucosamine 6-phosphate (route II): step 2/2. Its pathway is nucleotide-sugar biosynthesis; UDP-N-acetyl-alpha-D-glucosamine biosynthesis; UDP-N-acetyl-alpha-D-glucosamine from N-acetyl-alpha-D-glucosamine 1-phosphate: step 1/1. It functions in the pathway bacterial outer membrane biogenesis; LPS lipid A biosynthesis. Functionally, catalyzes the last two sequential reactions in the de novo biosynthetic pathway for UDP-N-acetylglucosamine (UDP-GlcNAc). The C-terminal domain catalyzes the transfer of acetyl group from acetyl coenzyme A to glucosamine-1-phosphate (GlcN-1-P) to produce N-acetylglucosamine-1-phosphate (GlcNAc-1-P), which is converted into UDP-GlcNAc by the transfer of uridine 5-monophosphate (from uridine 5-triphosphate), a reaction catalyzed by the N-terminal domain. The polypeptide is Bifunctional protein GlmU (Polaromonas sp. (strain JS666 / ATCC BAA-500)).